Reading from the N-terminus, the 194-residue chain is Segregation and condensation protein B (194 aa).

This sequence belongs to the ScpB family. Homodimer. Homodimerization may be required to stabilize the binding of ScpA to the Smc head domains. Component of a cohesin-like complex composed of ScpA, ScpB and the Smc homodimer, in which ScpA and ScpB bind to the head domain of Smc. The presence of the three proteins is required for the association of the complex with DNA.

The protein resides in the cytoplasm. Its function is as follows. Participates in chromosomal partition during cell division. May act via the formation of a condensin-like complex containing Smc and ScpA that pull DNA away from mid-cell into both cell halves. This chain is Segregation and condensation protein B, found in Streptococcus agalactiae serotype Ia (strain ATCC 27591 / A909 / CDC SS700).